A 176-amino-acid polypeptide reads, in one-letter code: Disulfide bond formation protein B (176 aa).

The Cytoplasmic segment spans residues Met1 to Ala14. A helical transmembrane segment spans residues Trp15–Tyr31. At Phe32–Val49 the chain is on the periplasmic side. A disulfide bridge links Cys41 with Cys44. Residues Ala50–Pro65 traverse the membrane as a helical segment. Residues Arg66–Tyr71 are Cytoplasmic-facing. Residues Leu72–Trp89 traverse the membrane as a helical segment. Over Ala90–Gln144 the chain is Periplasmic. An intrachain disulfide couples Cys104 to Cys130. Residues Trp145–Ser163 traverse the membrane as a helical segment. The Cytoplasmic portion of the chain corresponds to Gln164–Arg176.

This sequence belongs to the DsbB family.

The protein localises to the cell inner membrane. In terms of biological role, required for disulfide bond formation in some periplasmic proteins. Acts by oxidizing the DsbA protein. The protein is Disulfide bond formation protein B of Yersinia pestis bv. Antiqua (strain Nepal516).